The primary structure comprises 33 residues: Dermonecrotic toxin LbSicTox-alphaIB1b (33 aa).

His-11 is an active-site residue. Positions 31 and 33 each coordinate Mg(2+).

It belongs to the arthropod phospholipase D family. Class II subfamily. Requires Mg(2+) as cofactor. Post-translationally, contains 2 disulfide bonds. Expressed by the venom gland.

The protein localises to the secreted. It catalyses the reaction an N-(acyl)-sphingosylphosphocholine = an N-(acyl)-sphingosyl-1,3-cyclic phosphate + choline. The enzyme catalyses an N-(acyl)-sphingosylphosphoethanolamine = an N-(acyl)-sphingosyl-1,3-cyclic phosphate + ethanolamine. The catalysed reaction is a 1-acyl-sn-glycero-3-phosphocholine = a 1-acyl-sn-glycero-2,3-cyclic phosphate + choline. It carries out the reaction a 1-acyl-sn-glycero-3-phosphoethanolamine = a 1-acyl-sn-glycero-2,3-cyclic phosphate + ethanolamine. Dermonecrotic toxins cleave the phosphodiester linkage between the phosphate and headgroup of certain phospholipids (sphingolipid and lysolipid substrates), forming an alcohol (often choline) and a cyclic phosphate. This toxin acts on sphingomyelin (SM) with high activity (9.5 U/mg). It may also act on ceramide phosphoethanolamine (CPE), lysophosphatidylcholine (LPC) and lysophosphatidylethanolamine (LPE), but not on lysophosphatidylserine (LPS), and lysophosphatidylglycerol (LPG). It acts by transphosphatidylation, releasing exclusively cyclic phosphate products as second products. Induces dermonecrosis, hemolysis, increased vascular permeability, edema, inflammatory response, and platelet aggregation. This chain is Dermonecrotic toxin LbSicTox-alphaIB1b, found in Loxosceles boneti (North American fiddleback spider).